We begin with the raw amino-acid sequence, 313 residues long: Holliday junction branch migration complex subunit RuvB (313 aa).

The tract at residues M1–Y157 is large ATPase domain (RuvB-L). ATP is bound by residues G38, K41, T42, T43, E104 to F106, R147, Y157, and R194. T42 is a binding site for Mg(2+). The tract at residues S158–G228 is small ATPAse domain (RuvB-S). The interval K231 to E313 is head domain (RuvB-H). DNA-binding residues include R286 and R291.

It belongs to the RuvB family. In terms of assembly, homohexamer. Forms an RuvA(8)-RuvB(12)-Holliday junction (HJ) complex. HJ DNA is sandwiched between 2 RuvA tetramers; dsDNA enters through RuvA and exits via RuvB. An RuvB hexamer assembles on each DNA strand where it exits the tetramer. Each RuvB hexamer is contacted by two RuvA subunits (via domain III) on 2 adjacent RuvB subunits; this complex drives branch migration. In the full resolvosome a probable DNA-RuvA(4)-RuvB(12)-RuvC(2) complex forms which resolves the HJ.

The protein localises to the cytoplasm. It catalyses the reaction ATP + H2O = ADP + phosphate + H(+). The RuvA-RuvB-RuvC complex processes Holliday junction (HJ) DNA during genetic recombination and DNA repair, while the RuvA-RuvB complex plays an important role in the rescue of blocked DNA replication forks via replication fork reversal (RFR). RuvA specifically binds to HJ cruciform DNA, conferring on it an open structure. The RuvB hexamer acts as an ATP-dependent pump, pulling dsDNA into and through the RuvAB complex. RuvB forms 2 homohexamers on either side of HJ DNA bound by 1 or 2 RuvA tetramers; 4 subunits per hexamer contact DNA at a time. Coordinated motions by a converter formed by DNA-disengaged RuvB subunits stimulates ATP hydrolysis and nucleotide exchange. Immobilization of the converter enables RuvB to convert the ATP-contained energy into a lever motion, pulling 2 nucleotides of DNA out of the RuvA tetramer per ATP hydrolyzed, thus driving DNA branch migration. The RuvB motors rotate together with the DNA substrate, which together with the progressing nucleotide cycle form the mechanistic basis for DNA recombination by continuous HJ branch migration. Branch migration allows RuvC to scan DNA until it finds its consensus sequence, where it cleaves and resolves cruciform DNA. The polypeptide is Holliday junction branch migration complex subunit RuvB (Thermosipho melanesiensis (strain DSM 12029 / CIP 104789 / BI429)).